Here is a 40-residue protein sequence, read N- to C-terminus: MADTTGRIPLWIVGTVTGILVIGLIGVFFYGSYSGLGSSL.

A helical transmembrane segment spans residues 8-28 (IPLWIVGTVTGILVIGLIGVF).

Belongs to the PsbJ family. PSII is composed of 1 copy each of membrane proteins PsbA, PsbB, PsbC, PsbD, PsbE, PsbF, PsbH, PsbI, PsbJ, PsbK, PsbL, PsbM, PsbT, PsbX, PsbY, PsbZ, Psb30/Ycf12, at least 3 peripheral proteins of the oxygen-evolving complex and a large number of cofactors. It forms dimeric complexes.

It localises to the plastid. Its subcellular location is the chloroplast thylakoid membrane. Functionally, one of the components of the core complex of photosystem II (PSII). PSII is a light-driven water:plastoquinone oxidoreductase that uses light energy to abstract electrons from H(2)O, generating O(2) and a proton gradient subsequently used for ATP formation. It consists of a core antenna complex that captures photons, and an electron transfer chain that converts photonic excitation into a charge separation. This chain is Photosystem II reaction center protein J, found in Coffea arabica (Arabian coffee).